Consider the following 305-residue polypeptide: UPF0282 protein Pisl_0021 (305 aa).

Belongs to the UPF0282 family.

The chain is UPF0282 protein Pisl_0021 from Pyrobaculum islandicum (strain DSM 4184 / JCM 9189 / GEO3).